We begin with the raw amino-acid sequence, 96 residues long: Cobalt transport protein CbiN (96 aa).

2 consecutive transmembrane segments (helical) span residues 4 to 24 (WLAAGGILLGALVVFSFVSAG) and 59 to 79 (IESLLFSIQAAVGGIIIGYYL).

Belongs to the CbiN family. As to quaternary structure, forms an energy-coupling factor (ECF) transporter complex composed of an ATP-binding protein (A component, CbiO), a transmembrane protein (T component, CbiQ) and 2 possible substrate-capture proteins (S components, CbiM and CbiN) of unknown stoichimetry.

It is found in the cell membrane. Its pathway is cofactor biosynthesis; adenosylcobalamin biosynthesis. Part of the energy-coupling factor (ECF) transporter complex CbiMNOQ involved in cobalt import. The sequence is that of Cobalt transport protein CbiN from Halobacterium salinarum (strain ATCC 29341 / DSM 671 / R1).